Here is a 324-residue protein sequence, read N- to C-terminus: Homoserine kinase (324 aa).

100–110 serves as a coordination point for ATP; sequence PLSSGMGSSAA.

The protein belongs to the GHMP kinase family. Homoserine kinase subfamily.

It is found in the cytoplasm. The catalysed reaction is L-homoserine + ATP = O-phospho-L-homoserine + ADP + H(+). It functions in the pathway amino-acid biosynthesis; L-threonine biosynthesis; L-threonine from L-aspartate: step 4/5. Its function is as follows. Catalyzes the ATP-dependent phosphorylation of L-homoserine to L-homoserine phosphate. In Chlorobaculum tepidum (strain ATCC 49652 / DSM 12025 / NBRC 103806 / TLS) (Chlorobium tepidum), this protein is Homoserine kinase.